The sequence spans 509 residues: Heat shock 70 kDa protein 14 (509 aa).

Belongs to the heat shock protein 70 family. Component of ribosome-associated complex (RAC), a heterodimer composed of Hsp70/DnaK-type chaperone HSPA14 and Hsp40/DnaJ-type chaperone DNAJC2.

It localises to the cytoplasm. The protein localises to the cytosol. Functionally, component of the ribosome-associated complex (RAC), a complex involved in folding or maintaining nascent polypeptides in a folding-competent state. In the RAC complex, binds to the nascent polypeptide chain, while DNAJC2 stimulates its ATPase activity. The sequence is that of Heat shock 70 kDa protein 14 (HSPA14) from Macaca fascicularis (Crab-eating macaque).